Consider the following 465-residue polypeptide: Argininosuccinate lyase (465 aa).

Belongs to the lyase 1 family. Argininosuccinate lyase subfamily.

Its subcellular location is the cytoplasm. It catalyses the reaction 2-(N(omega)-L-arginino)succinate = fumarate + L-arginine. It functions in the pathway amino-acid biosynthesis; L-arginine biosynthesis; L-arginine from L-ornithine and carbamoyl phosphate: step 3/3. In Hyphomonas neptunium (strain ATCC 15444), this protein is Argininosuccinate lyase.